The chain runs to 343 residues: DNA polymerase III subunit delta (343 aa).

3 domain regions span residues 1–140 (MIRL…VTCQ), 141–210 (TPEQ…NDAA), and 211–343 (HFTP…FIDG).

The protein belongs to the DNA polymerase HolA subunit family. As to quaternary structure, the DNA polymerase III holoenzyme complex contains at least 10 different subunits organized into 3 functionally essential subassemblies: the Pol III core, the beta sliding clamp processivity factor and the clamp-loading complex. The Pol III core (subunits alpha, epsilon and theta) contains the polymerase and the 3'-5' exonuclease proofreading activities. The polymerase is tethered to the template via the dimeric beta sliding clamp processivity factor. The clamp-loading complex (also called gamma complex) assembles the beta sliding clamp onto the primed template and plays a central role in the organization and communication at the replication fork. The clamp-loading complex contains delta, delta', psi and chi, and 3 copies of either or both of two different DnaX proteins, gamma and tau. The DNA replisome complex has a single clamp loader (3 tau and 1 each of delta, delta', psi and chi subunits) which binds 3 Pol III cores (1 core on the leading strand and 2 on the lagging strand) each with a beta sliding clamp dimer. Additional proteins in the replisome are other copies of gamma, psi and chi, Ssb, DNA helicase and RNA primase. The clamp loader hydrolyzes ATP to assemble the beta processivity factor onto the primed template and plays a central role in the organization and communication at the replication fork; the minimal complex to load the beta sliding clamp on DNA is delta, delta', gamma.

It catalyses the reaction DNA(n) + a 2'-deoxyribonucleoside 5'-triphosphate = DNA(n+1) + diphosphate. Functionally, part of the beta sliding clamp loading complex, which hydrolyzes ATP to load the beta clamp onto primed DNA to form the DNA replication pre-initiation complex. DNA polymerase III is a complex, multichain enzyme responsible for most of the replicative synthesis in bacteria. This DNA polymerase also exhibits 3'-5' exonuclease activity. The delta subunit is the wrench that will open the beta subunit dimer, which has been modeled to leave a gap large enough for ssDNA to pass through. The gamma complex (gamma(3),delta,delta') is thought to load beta dimers onto DNA by binding ATP which alters the complex's conformation so it can bind beta sliding clamp dimers and open them at one interface. Primed DNA is recognized, ATP is hydrolyzed releasing the gamma complex and closing the beta sliding clamp ring around the primed DNA. The protein is DNA polymerase III subunit delta (holA) of Escherichia coli (strain K12).